The primary structure comprises 470 residues: mRNA export factor ICP27 homolog (470 aa).

2 disordered regions span residues 1 to 31 (MALS…TGGD) and 62 to 204 (VGDP…DRLN). Residues 71-85 (VSFSASPQRAQPSNP) are compositionally biased toward polar residues. 2 stretches are compositionally biased toward basic residues: residues 94–107 (HGRR…RRNN) and 178–187 (RVHRNRRRGN). Residues C359, H437, C441, and C446 each contribute to the Zn(2+) site. A CHC2-type zinc finger spans residues 359-446 (CYLSSSGSPT…HKRRCKADTC (88 aa)).

Belongs to the HHV-1 ICP27 protein family. As to quaternary structure, homodimer. Homodimerization is required for transactivation. Associates in a complex with RNA, and host export factors NXF1/TAP and ALYREF; these interactions allow nuclear export of viral transcripts. Interacts with three host shuttling SR proteins SRSF1, SRSF3 and SRSF7. Interacts with host SRPK1. Interacts with IE62; this interaction enhances IE62 transactivation.

Its subcellular location is the host cytoplasm. The protein localises to the host nucleus. In terms of biological role, multifunctional regulator of the expression of viral genes that mediates nuclear export of viral intronless mRNAs. This immediate early (EI) protein promotes the nuclear export of viral intronless mRNAs by interacting with mRNAs and host NXF1/TAP. The chain is mRNA export factor ICP27 homolog from Equine herpesvirus 1 (strain Ab4p) (EHV-1).